A 513-amino-acid polypeptide reads, in one-letter code: L-threonine dehydratase biosynthetic IlvA (513 aa).

At K61 the chain carries N6-(pyridoxal phosphate)lysine. Pyridoxal 5'-phosphate contacts are provided by residues N88, 187–191 (GGGGL), and S314. ACT-like domains lie at 338 to 409 (ALLA…DLSN) and 432 to 504 (RLYS…DVTE).

The protein belongs to the serine/threonine dehydratase family. As to quaternary structure, homotetramer. Pyridoxal 5'-phosphate serves as cofactor.

The enzyme catalyses L-threonine = 2-oxobutanoate + NH4(+). It functions in the pathway amino-acid biosynthesis; L-isoleucine biosynthesis; 2-oxobutanoate from L-threonine: step 1/1. Its function is as follows. Catalyzes the anaerobic formation of alpha-ketobutyrate and ammonia from threonine in a two-step reaction. The first step involved a dehydration of threonine and a production of enamine intermediates (aminocrotonate), which tautomerizes to its imine form (iminobutyrate). Both intermediates are unstable and short-lived. The second step is the nonenzymatic hydrolysis of the enamine/imine intermediates to form 2-ketobutyrate and free ammonia. In the low water environment of the cell, the second step is accelerated by RidA. The protein is L-threonine dehydratase biosynthetic IlvA (ilvA) of Pasteurella multocida (strain Pm70).